A 341-amino-acid chain; its full sequence is S-adenosylmethionine:tRNA ribosyltransferase-isomerase (341 aa).

This sequence belongs to the QueA family. As to quaternary structure, monomer.

It is found in the cytoplasm. It carries out the reaction 7-aminomethyl-7-carbaguanosine(34) in tRNA + S-adenosyl-L-methionine = epoxyqueuosine(34) in tRNA + adenine + L-methionine + 2 H(+). It functions in the pathway tRNA modification; tRNA-queuosine biosynthesis. Functionally, transfers and isomerizes the ribose moiety from AdoMet to the 7-aminomethyl group of 7-deazaguanine (preQ1-tRNA) to give epoxyqueuosine (oQ-tRNA). The chain is S-adenosylmethionine:tRNA ribosyltransferase-isomerase from Clostridium tetani (strain Massachusetts / E88).